The chain runs to 397 residues: Argininosuccinate synthase (397 aa).

Position 9–17 (9–17 (AYSGGLDTS)) interacts with ATP. Tyr87 is a binding site for L-citrulline. Residue Gly117 participates in ATP binding. L-aspartate-binding residues include Thr119, Asn123, and Asp124. Asn123 is an L-citrulline binding site. Positions 127, 175, 184, 260, and 272 each coordinate L-citrulline.

Belongs to the argininosuccinate synthase family. Type 1 subfamily. As to quaternary structure, homotetramer.

The protein resides in the cytoplasm. The enzyme catalyses L-citrulline + L-aspartate + ATP = 2-(N(omega)-L-arginino)succinate + AMP + diphosphate + H(+). Its pathway is amino-acid biosynthesis; L-arginine biosynthesis; L-arginine from L-ornithine and carbamoyl phosphate: step 2/3. The chain is Argininosuccinate synthase from Methanococcus maripaludis (strain DSM 14266 / JCM 13030 / NBRC 101832 / S2 / LL).